We begin with the raw amino-acid sequence, 278 residues long: DNA adenine methylase (278 aa).

Residues Trp-10, Lys-14, Asp-54, and Asp-181 each contribute to the S-adenosyl-L-methionine site.

It belongs to the N(4)/N(6)-methyltransferase family.

It carries out the reaction a 2'-deoxyadenosine in DNA + S-adenosyl-L-methionine = an N(6)-methyl-2'-deoxyadenosine in DNA + S-adenosyl-L-homocysteine + H(+). Its function is as follows. An alpha subtype methylase, recognizes the double-stranded sequence 5'-GATC-3' and methylates A-2. May be involved in methyl-directed DNA mismatch repair, initiation of chromosome replication and gene expression. The sequence is that of DNA adenine methylase (dam) from Escherichia coli O157:H7.